Here is a 199-residue protein sequence, read N- to C-terminus: Elongation factor Ts (199 aa).

The involved in Mg(2+) ion dislocation from EF-Tu stretch occupies residues 81 to 84 (TDFV).

This sequence belongs to the EF-Ts family.

It is found in the cytoplasm. Functionally, associates with the EF-Tu.GDP complex and induces the exchange of GDP to GTP. It remains bound to the aminoacyl-tRNA.EF-Tu.GTP complex up to the GTP hydrolysis stage on the ribosome. The polypeptide is Elongation factor Ts (Thermotoga sp. (strain RQ2)).